Reading from the N-terminus, the 510-residue chain is Putative glycerol-3-phosphate transporter 3 (510 aa).

A run of 12 helical transmembrane segments spans residues 31–51 (LSFKQYQAMVFVLTFIAYIAF), 91–111 (ALLGQIDLAFLSVYAVGMFVA), 123–143 (FLTIGMVGTGVCTALFGVAFW), 158–178 (LAGWFQSIGWPCVVAVLGNWF), 185–205 (VIMGVWSAHTSLGNIIGTLIA), 217–237 (FVGPALLITFLGIVVYLFLPV), 279–299 (VGFLAAWKIPGVAPFAFCLFF), 331–351 (GNLSTLFDVGGVVGGILAGYF), 355–375 (LDGRAITAGGFIYLTIPALFL), 378–398 (IYGHVSMTINIILMFVAGLFV), 436–456 (TGSVGAAIGPVLTGYIAAISW), and 459–479 (VFYMLMTAALISGLLLTTLII).

The protein belongs to the major facilitator superfamily. Organophosphate:Pi antiporter (OPA) (TC 2.A.1.4) family.

Its subcellular location is the membrane. The sequence is that of Putative glycerol-3-phosphate transporter 3 from Arabidopsis thaliana (Mouse-ear cress).